Reading from the N-terminus, the 734-residue chain is Transcription factor EMB1444 (734 aa).

Positions 537 to 566 (QFPTSLEIPKKNKKRAKPGESSRPRPRDRQ) are disordered. The Nuclear localization signal signature appears at 548–555 (NKKRAKPG). The bHLH domain occupies 552–601 (AKPGESSRPRPRDRQLIQDRIKELRELVPNGSKCSIDSLLECTIKHMLFL). Residues 553-566 (KPGESSRPRPRDRQ) are compositionally biased toward basic and acidic residues.

This sequence belongs to the bHLH protein family. LHW subfamily. Homodimer.

The protein localises to the nucleus. Its function is as follows. Transcription factor that may regulate root development. This Arabidopsis thaliana (Mouse-ear cress) protein is Transcription factor EMB1444.